A 62-amino-acid polypeptide reads, in one-letter code: Large ribosomal subunit protein uL30 (62 aa).

Belongs to the universal ribosomal protein uL30 family. Part of the 50S ribosomal subunit.

The polypeptide is Large ribosomal subunit protein uL30 (Cereibacter sphaeroides (strain ATCC 17029 / ATH 2.4.9) (Rhodobacter sphaeroides)).